We begin with the raw amino-acid sequence, 244 residues long: Sperm-egg fusion protein Juno (244 aa).

An N-terminal signal peptide occupies residues 1–19 (MAQWWQILLGLWAVLPTLA). Disulfide bonds link cysteine 27/cysteine 55, cysteine 47/cysteine 95, cysteine 56/cysteine 99, cysteine 79/cysteine 166, cysteine 86/cysteine 137, cysteine 126/cysteine 200, cysteine 130/cysteine 180, and cysteine 143/cysteine 160. The important for interaction with IZUMO1 stretch occupies residues 62–81 (WEAHLEEPLLFNFSMMHCGL). Asparagine 73 carries an N-linked (GlcNAc...) asparagine glycan. Residue asparagine 185 is glycosylated (N-linked (GlcNAc...) asparagine). Glycine 222 carries GPI-anchor amidated glycine lipidation. Positions 223-244 (SALAPQLSYTLPAFSLCLLFHP) are excised as a propeptide.

This sequence belongs to the folate receptor family. Monomer. Interacts with IZUMO1; the interaction is direct. IZUMO1 and IZUMO1R/JUNO form a complex with 1:1 stoichiometry. Interacts with WDR54. In terms of processing, the protein is rapidly cleaved following fertilization, being only weakly detectable in zona-intact fertilized eggs at telophase II and undetectable at the pronuclear stage. Sheding is probably required to block to polyspermy and ensuring egg fusion with a single sperm. Widely expressed with higher expression in thymus, spleen and lung. Present at the cell surface of unfertilized oocytes, while it is barely detectable 30 to 40 minutes after fertilization (at protein level).

The protein resides in the cell membrane. Functionally, receptor for IZUMO1 present at the cell surface of oocytes (oolemma), which is essential for species-specific gamete recognition and fertilization. The IZUMO1:IZUMO1R/JUNO interaction is a necessary adhesion event between sperm and egg that is required for fertilization but is not sufficient for cell fusion. The ligand-receptor interaction probably does not act as a membrane 'fusogen'. Does not bind folate. The sequence is that of Sperm-egg fusion protein Juno from Mus musculus (Mouse).